The chain runs to 177 residues: Small ribosomal subunit protein uS5 (177 aa).

An S5 DRBM domain is found at 21–84; that stretch reads LLDRVVKIKR…KQASRSMIHV (64 aa).

It belongs to the universal ribosomal protein uS5 family. In terms of assembly, part of the 30S ribosomal subunit. Contacts proteins S4 and S8.

Functionally, with S4 and S12 plays an important role in translational accuracy. Located at the back of the 30S subunit body where it stabilizes the conformation of the head with respect to the body. The chain is Small ribosomal subunit protein uS5 from Rhodopirellula baltica (strain DSM 10527 / NCIMB 13988 / SH1).